Consider the following 567-residue polypeptide: TGF-beta receptor type-2 (567 aa).

A signal peptide spans 1–23 (MGRGLLRGLWPLHIVLWTRIAST). The Extracellular portion of the chain corresponds to 24–166 (IPPHVPKSVN…SPDLLLVIIQ (143 aa)). 6 disulfides stabilise this stretch: Cys51/Cys84, Cys54/Cys71, Cys61/Cys67, Cys77/Cys101, Cys121/Cys136, and Cys138/Cys143. 2 N-linked (GlcNAc...) asparagine glycosylation sites follow: Asn70 and Asn94. A helical transmembrane segment spans residues 167-187 (VTGVSLLPPLGIAIAVIIIFY). Residues 188-567 (CYRVHRQQKL…PEDGSLNTTK (380 aa)) are Cytoplasmic-facing. Residues 244–546 (IELDTLVGKG…RFSELEHPER (303 aa)) enclose the Protein kinase domain. Residues 250-258 (VGKGRFAEV) and Lys277 each bind ATP. Asp379 functions as the Proton acceptor in the catalytic mechanism. Phosphoserine occurs at positions 409, 548, and 553. The interval 545–567 (ERLSGRSCSQEKIPEDGSLNTTK) is disordered.

It belongs to the protein kinase superfamily. TKL Ser/Thr protein kinase family. TGFB receptor subfamily. As to quaternary structure, homodimer. Heterohexamer; TGFB1, TGFB2 and TGFB3 homodimeric ligands assemble a functional receptor composed of two TGFBR1 and TGFBR2 heterodimers to form a ligand-receptor heterohexamer. The respective affinity of TGFRB1 and TGFRB2 for the ligands may modulate the kinetics of assembly of the receptor and may explain the different biological activities of TGFB1, TGFB2 and TGFB3. Component of a complex composed of TSC22D1 (via N-terminus), TGFBR1 and TGFBR2; the interaction between TSC22D1 and TGFBR1 is inhibited by SMAD7 and promoted by TGFB1. Interacts with DAXX. Interacts with DYNLT4. Interacts with ZFYVE9; ZFYVE9 recruits SMAD2 and SMAD3 to the TGF-beta receptor. Interacts with and is activated by SCUBE3; this interaction does not affect TGFB1-binding to TGFBR2. Interacts with VPS39; this interaction is independent of the receptor kinase activity and of the presence of TGF-beta. Interacts with CLU. Mg(2+) serves as cofactor. It depends on Mn(2+) as a cofactor. Post-translationally, phosphorylated on a Ser/Thr residue in the cytoplasmic domain. As to expression, widely expressed in adult. Expressed primarily in mesenchyme and epidermis of the midgestational fetus.

The protein localises to the cell membrane. It localises to the membrane raft. It carries out the reaction L-threonyl-[receptor-protein] + ATP = O-phospho-L-threonyl-[receptor-protein] + ADP + H(+). The catalysed reaction is L-seryl-[receptor-protein] + ATP = O-phospho-L-seryl-[receptor-protein] + ADP + H(+). Transmembrane serine/threonine kinase forming with the TGF-beta type I serine/threonine kinase receptor, TGFBR1, the non-promiscuous receptor for the TGF-beta cytokines TGFB1, TGFB2 and TGFB3. Transduces the TGFB1, TGFB2 and TGFB3 signal from the cell surface to the cytoplasm and is thus regulating a plethora of physiological and pathological processes including cell cycle arrest in epithelial and hematopoietic cells, control of mesenchymal cell proliferation and differentiation, wound healing, extracellular matrix production, immunosuppression and carcinogenesis. The formation of the receptor complex composed of 2 TGFBR1 and 2 TGFBR2 molecules symmetrically bound to the cytokine dimer results in the phosphorylation and the activation of TGFRB1 by the constitutively active TGFBR2. Activated TGFBR1 phosphorylates SMAD2 which dissociates from the receptor and interacts with SMAD4. The SMAD2-SMAD4 complex is subsequently translocated to the nucleus where it modulates the transcription of the TGF-beta-regulated genes. This constitutes the canonical SMAD-dependent TGF-beta signaling cascade. Also involved in non-canonical, SMAD-independent TGF-beta signaling pathways. Functionally, has transforming growth factor beta-activated receptor activity. The sequence is that of TGF-beta receptor type-2 (Tgfbr2) from Mus musculus (Mouse).